The sequence spans 426 residues: MTTETLTVRDLGLRARAAARVLRSLPTARKAAALHAIARELQAREGVILAANARDVAAAEAARLPAHMVARLRLDAASLAAIADDVAAVAQLPDPVGETTPERILPSGIRVSQRRVPLGVLGVIYESRPNVTVDVAALALMSGNAVILRGGKETVNSNAALEGAIRAALASENIPEDAVQVIRDPARERMLELLRLDDLVDAIIPRGGAGLHRFCVENATVPVIVGGIGVVHIYLDESFTRDPADVARAVNLIRNAKVQKPSACNALDTLLIHVRALPVLPAIARDLTAHGVTLRADPPALAALQTAGLEAQAATDADYGTEFLALTASIRTVSGLEEALDFIAAHGNHTDVILTRDPTQAERFVQDVDSAAVMVNASPRFNDGGQLGLGAEVAISTQKLHARGPMGLRELTTTKWVVVGDGQVRE.

This sequence belongs to the gamma-glutamyl phosphate reductase family.

It localises to the cytoplasm. It carries out the reaction L-glutamate 5-semialdehyde + phosphate + NADP(+) = L-glutamyl 5-phosphate + NADPH + H(+). Its pathway is amino-acid biosynthesis; L-proline biosynthesis; L-glutamate 5-semialdehyde from L-glutamate: step 2/2. Its function is as follows. Catalyzes the NADPH-dependent reduction of L-glutamate 5-phosphate into L-glutamate 5-semialdehyde and phosphate. The product spontaneously undergoes cyclization to form 1-pyrroline-5-carboxylate. The protein is Gamma-glutamyl phosphate reductase of Deinococcus geothermalis (strain DSM 11300 / CIP 105573 / AG-3a).